The sequence spans 103 residues: Pilin (103 aa).

Residues 1–30 form the signal peptide; sequence MYRFACRTLMLAACILATGVAGLGVGAQSA. Residues 61–76 are compositionally biased toward basic and acidic residues; it reads HDDFHRDSDGPDHSRD. Residues 61-103 are disordered; the sequence is HDDFHRDSDGPDHSRDYPGPILEGPVLDDPGAAPPPPAAGGGA. Residues 92-103 show a composition bias toward pro residues; it reads AAPPPPAAGGGA.

This sequence belongs to the mycobacterial pilin family. In terms of assembly, forms a homomer composed of subunits assembled in a large structure.

The protein localises to the fimbrium. Structural subunit of pili, which are thin, flexible, coiled-coil, aggregative fibers. Mediates adhesion to the extracellular matrix, an event that would facilitate direct interaction with the host epithelium during infection in the lung or other tissues. The polypeptide is Pilin (mtp) (Mycobacterium bovis (strain ATCC BAA-935 / AF2122/97)).